We begin with the raw amino-acid sequence, 279 residues long: Tryptophan synthase alpha chain (279 aa).

Active-site proton acceptor residues include E50 and D61.

Belongs to the TrpA family. As to quaternary structure, tetramer of two alpha and two beta chains.

The catalysed reaction is (1S,2R)-1-C-(indol-3-yl)glycerol 3-phosphate + L-serine = D-glyceraldehyde 3-phosphate + L-tryptophan + H2O. It functions in the pathway amino-acid biosynthesis; L-tryptophan biosynthesis; L-tryptophan from chorismate: step 5/5. In terms of biological role, the alpha subunit is responsible for the aldol cleavage of indoleglycerol phosphate to indole and glyceraldehyde 3-phosphate. This Brucella ovis (strain ATCC 25840 / 63/290 / NCTC 10512) protein is Tryptophan synthase alpha chain.